A 310-amino-acid chain; its full sequence is Upstream stimulatory factor 1 (310 aa).

Polar residues predominate over residues methionine 1–isoleucine 17. Disordered regions lie at residues methionine 1–glutamate 26 and glutamine 171–arginine 209. Residues glutamate 190 to arginine 209 are compositionally biased toward basic and acidic residues. Positions lysine 199 to leucine 254 constitute a bHLH domain. Positions leucine 271–leucine 292 are leucine-zipper. A Glycyl lysine isopeptide (Lys-Gly) (interchain with G-Cter in SUMO2) cross-link involves residue lysine 306.

As to quaternary structure, efficient DNA binding requires dimerization with another bHLH protein. Binds DNA as a homodimer or a heterodimer (USF1/USF2).

It localises to the nucleus. Functionally, transcription factor that binds to a symmetrical DNA sequence (E-boxes) (5'-CACGTG-3') that is found in a variety of viral and cellular promoters. The protein is Upstream stimulatory factor 1 (Usf1) of Mus musculus (Mouse).